We begin with the raw amino-acid sequence, 482 residues long: UDP-N-acetylmuramate--L-alanine ligase (482 aa).

Residue 111–117 (GTHGKTT) participates in ATP binding.

The protein belongs to the MurCDEF family.

The protein resides in the cytoplasm. The catalysed reaction is UDP-N-acetyl-alpha-D-muramate + L-alanine + ATP = UDP-N-acetyl-alpha-D-muramoyl-L-alanine + ADP + phosphate + H(+). It functions in the pathway cell wall biogenesis; peptidoglycan biosynthesis. Its function is as follows. Cell wall formation. This chain is UDP-N-acetylmuramate--L-alanine ligase, found in Symbiobacterium thermophilum (strain DSM 24528 / JCM 14929 / IAM 14863 / T).